The primary structure comprises 246 residues: Pyridoxine 5'-phosphate synthase (246 aa).

Residue asparagine 12 participates in 3-amino-2-oxopropyl phosphate binding. Position 14-15 (14-15) interacts with 1-deoxy-D-xylulose 5-phosphate; the sequence is DH. Arginine 23 serves as a coordination point for 3-amino-2-oxopropyl phosphate. The active-site Proton acceptor is histidine 48. The 1-deoxy-D-xylulose 5-phosphate site is built by arginine 50 and histidine 55. Glutamate 75 serves as the catalytic Proton acceptor. Threonine 105 contacts 1-deoxy-D-xylulose 5-phosphate. Histidine 196 serves as the catalytic Proton donor. Residues glycine 197 and 218-219 contribute to the 3-amino-2-oxopropyl phosphate site; that span reads GH.

This sequence belongs to the PNP synthase family. As to quaternary structure, homooctamer; tetramer of dimers.

The protein resides in the cytoplasm. The catalysed reaction is 3-amino-2-oxopropyl phosphate + 1-deoxy-D-xylulose 5-phosphate = pyridoxine 5'-phosphate + phosphate + 2 H2O + H(+). The protein operates within cofactor biosynthesis; pyridoxine 5'-phosphate biosynthesis; pyridoxine 5'-phosphate from D-erythrose 4-phosphate: step 5/5. Functionally, catalyzes the complicated ring closure reaction between the two acyclic compounds 1-deoxy-D-xylulose-5-phosphate (DXP) and 3-amino-2-oxopropyl phosphate (1-amino-acetone-3-phosphate or AAP) to form pyridoxine 5'-phosphate (PNP) and inorganic phosphate. In Pseudomonas putida (strain GB-1), this protein is Pyridoxine 5'-phosphate synthase.